The sequence spans 417 residues: NADH-quinone oxidoreductase subunit D (417 aa).

This sequence belongs to the complex I 49 kDa subunit family. In terms of assembly, NDH-1 is composed of 14 different subunits. Subunits NuoB, C, D, E, F, and G constitute the peripheral sector of the complex.

Its subcellular location is the cell inner membrane. The enzyme catalyses a quinone + NADH + 5 H(+)(in) = a quinol + NAD(+) + 4 H(+)(out). In terms of biological role, NDH-1 shuttles electrons from NADH, via FMN and iron-sulfur (Fe-S) centers, to quinones in the respiratory chain. The immediate electron acceptor for the enzyme in this species is believed to be ubiquinone. Couples the redox reaction to proton translocation (for every two electrons transferred, four hydrogen ions are translocated across the cytoplasmic membrane), and thus conserves the redox energy in a proton gradient. This Albidiferax ferrireducens (strain ATCC BAA-621 / DSM 15236 / T118) (Rhodoferax ferrireducens) protein is NADH-quinone oxidoreductase subunit D.